A 357-amino-acid chain; its full sequence is Protein pelota homolog (357 aa).

The protein belongs to the eukaryotic release factor 1 family. Pelota subfamily. Monomer. The cofactor is a divalent metal cation.

Its subcellular location is the cytoplasm. In terms of biological role, may function in recognizing stalled ribosomes, interact with stem-loop structures in stalled mRNA molecules, and effect endonucleolytic cleavage of the mRNA. May play a role in the release non-functional ribosomes and degradation of damaged mRNAs. Has endoribonuclease activity. This is Protein pelota homolog from Thermococcus kodakarensis (strain ATCC BAA-918 / JCM 12380 / KOD1) (Pyrococcus kodakaraensis (strain KOD1)).